Here is a 180-residue protein sequence, read N- to C-terminus: ATP synthase subunit delta (180 aa).

The protein belongs to the ATPase delta chain family. As to quaternary structure, F-type ATPases have 2 components, F(1) - the catalytic core - and F(0) - the membrane proton channel. F(1) has five subunits: alpha(3), beta(3), gamma(1), delta(1), epsilon(1). F(0) has three main subunits: a(1), b(2) and c(10-14). The alpha and beta chains form an alternating ring which encloses part of the gamma chain. F(1) is attached to F(0) by a central stalk formed by the gamma and epsilon chains, while a peripheral stalk is formed by the delta and b chains.

The protein resides in the cell membrane. Functionally, f(1)F(0) ATP synthase produces ATP from ADP in the presence of a proton or sodium gradient. F-type ATPases consist of two structural domains, F(1) containing the extramembraneous catalytic core and F(0) containing the membrane proton channel, linked together by a central stalk and a peripheral stalk. During catalysis, ATP synthesis in the catalytic domain of F(1) is coupled via a rotary mechanism of the central stalk subunits to proton translocation. Its function is as follows. This protein is part of the stalk that links CF(0) to CF(1). It either transmits conformational changes from CF(0) to CF(1) or is implicated in proton conduction. This is ATP synthase subunit delta from Bacillus cereus (strain B4264).